Here is an 862-residue protein sequence, read N- to C-terminus: MSLLHTFKETLKPCGSFPSSSSLRVSSTQELEPSRKPPKSSLSQQLLRLDDSYFLPSKHESKISKTQVEDFDHNEDDHKRNIKFDEEEVDEDDERSIEFGRPGLSRAEFDYSGPYEPLMLSSIGEIPIIHVPASINCRLLEHQREGVKFMYNLYKNNHGGILGDDMGLGKTIQTIAFLAAVYGKDGDAGESCLLESDKGPVLIICPSSIIHNWESEFSRWASFFKVSVYHGSNRDMILEKLKARGVEVLVTSFDTFRIQGPVLSGINWEIVIADEAHRLKNEKSKLYEACLEIKTKKRIGLTGTVMQNKISELFNLFEWVAPGSLGTREHFRDFYDEPLKLGQRATAPERFVQIADKRKQHLGSLLRKYMLRRTKEETIGHLMMGKEDNVVFCQMSQLQRRVYQRMIQLPEIQCLVNKDNPCACGSPLKQSECCRRIVPDGTIWSYLHRDNHDGCDSCPFCLVLPCLMKLQQISNHLELIKPNPKDEPEKQKKDAEFVSTVFGTDIDLLGGISASKSFMDLSDVKHCGKMRALEKLMASWISKGDKILLFSYSVRMLDILEKFLIRKGYSFARLDGSTPTNLRQSLVDDFNASPSKQVFLISTKAGGLGLNLVSANRVVIFDPNWNPSHDLQAQDRSFRYGQKRHVVVFRLLSAGSLEELVYTRQVYKQQLSNIAVAGKMETRYFEGVQDCKEFQGELFGISNLFRDLSDKLFTSDIVELHRDSNIDENKKRSLLETGVSEDEKEEEVMCSYKPEMEKPILKDLGIVYAHRNEDIINIGETTTSTSQRLNGDGNSADRKKKKRKGCSEEEDMSSSNREQKREKYKMLAEFKGMEILEFSRWVLSASPFDREKLLQDFLERVK.

2 disordered regions span residues 13–43 (PCGSFPSSSSLRVSSTQELEPSRKPPKSSLS) and 58–95 (KHESKISKTQVEDFDHNEDDHKRNIKFDEEEVDEDDER). The span at 16 to 27 (SFPSSSSLRVSS) shows a compositional bias: low complexity. Over residues 58–84 (KHESKISKTQVEDFDHNEDDHKRNIKF) the composition is skewed to basic and acidic residues. The span at 85–95 (DEEEVDEDDER) shows a compositional bias: acidic residues. Positions 151-323 (YNLYKNNHGG…FNLFEWVAPG (173 aa)) constitute a Helicase ATP-binding domain. 164–171 (DDMGLGKT) contributes to the ATP binding site. The DEAH box motif lies at 274-277 (DEAH). The stretch at 274–294 (DEAHRLKNEKSKLYEACLEIK) forms a coiled coil. The region spanning 532-685 (ALEKLMASWI…VAGKMETRYF (154 aa)) is the Helicase C-terminal domain. Residues 782-793 (TTSTSQRLNGDG) are compositionally biased toward polar residues. The segment at 782–821 (TTSTSQRLNGDGNSADRKKKKRKGCSEEEDMSSSNREQKR) is disordered.

Belongs to the SNF2/RAD54 helicase family.

Functionally, may be involved in early DNA damage response. Probable chromatin remodeling factor. The polypeptide is Switch 2 (Arabidopsis thaliana (Mouse-ear cress)).